The sequence spans 72 residues: Mitotic-spindle organizing protein 1 (72 aa).

Belongs to the MOZART1 family. As to quaternary structure, part of the gamma-tubulin complex.

The protein resides in the cytoplasm. The protein localises to the cytoskeleton. It is found in the microtubule organizing center. It localises to the spindle pole body. Functionally, required for gamma-tubulin complex recruitment to the microtubule organizing center (MTOC). In Coccidioides immitis (strain RS) (Valley fever fungus), this protein is Mitotic-spindle organizing protein 1.